A 336-amino-acid polypeptide reads, in one-letter code: N-((2S)-2-amino-2-carboxyethyl)-L-glutamate dehydrogenase (336 aa).

Lys-78 functions as the Proton donor/acceptor in the catalytic mechanism. NAD(+) is bound by residues Arg-122 and Lys-242.

This sequence belongs to the ornithine cyclodeaminase/mu-crystallin family. As to quaternary structure, homodimer.

It carries out the reaction N-[(2S)-2-amino-2-carboxyethyl]-L-glutamate + NAD(+) + H2O = (S)-2,3-diaminopropanoate + 2-oxoglutarate + NADH + H(+). The protein operates within siderophore biosynthesis. Functionally, catalyzes the hydrolysis of N-((2S)-2-amino-2-carboxyethyl)-L-glutamate (ACEGA) to form L-2,3-diaminopropionic acid and 2-oxoglutarate. Involved in the biosynthesis of L-2,3-diaminopropionic acid (L-Dap), a precursor of staphyloferrin B and antibiotics. The protein is N-((2S)-2-amino-2-carboxyethyl)-L-glutamate dehydrogenase of Staphylococcus aureus (strain NCTC 8325 / PS 47).